A 271-amino-acid polypeptide reads, in one-letter code: 5-deoxy-glucuronate isomerase (271 aa).

Belongs to the isomerase IolB family.

The enzyme catalyses 5-deoxy-D-glucuronate = 5-dehydro-2-deoxy-D-gluconate. It functions in the pathway polyol metabolism; myo-inositol degradation into acetyl-CoA; acetyl-CoA from myo-inositol: step 4/7. In terms of biological role, involved in the isomerization of 5-deoxy-glucuronate (5DG) to 5-dehydro-2-deoxy-D-gluconate (DKG or 2-deoxy-5-keto-D-gluconate). This Shouchella clausii (strain KSM-K16) (Alkalihalobacillus clausii) protein is 5-deoxy-glucuronate isomerase.